The sequence spans 321 residues: Phospholipid phosphatase-related protein type 5 (321 aa).

6 consecutive transmembrane segments (helical) span residues 10 to 30, 62 to 82, 122 to 142, 196 to 213, 225 to 245, and 252 to 272; these read SSML…AYYF, AVPP…VIIV, FLGI…AGQV, AALS…ITNT, VLCL…VAEY, and VIAG…CVVN.

Belongs to the PA-phosphatase related phosphoesterase family. Isoform 1 is expressed in brain, lung, kidney and colon. Isoform 2 is expressed in placenta, skeletal muscle and kidney.

It is found in the cell membrane. Its function is as follows. Induces filopodia formation and promotes neurite growth in a CDC42-independent manner; impedes neurite growth inhibitory-mediated axonal retraction. The sequence is that of Phospholipid phosphatase-related protein type 5 from Homo sapiens (Human).